A 657-amino-acid polypeptide reads, in one-letter code: Receptor-type tyrosine-protein phosphatase R (657 aa).

A signal peptide spans 1-21 (MRRAVCFPALCLLLNLHAAGC). Over 22-227 (FSGNNDHFLA…EADKIWSKEG (206 aa)) the chain is Extracellular. A glycan (O-linked (Xyl...) (chondroitin sulfate) serine) is linked at S23. N-linked (GlcNAc...) asparagine glycosylation occurs at N129. Residues 228-248 (FYAVVIFLSIFVIIVTCLMIL) form a helical membrane-spanning segment. Over 249–657 (YRLKERFQLS…ESRLSAETVQ (409 aa)) the chain is Cytoplasmic. S272 is subject to Phosphoserine. Position 339 is a phosphoserine; by PKA (S339). One can recognise a Tyrosine-protein phosphatase domain in the interval 393-647 (LQSEFMEIPM…EFVHHALCLY (255 aa)). Substrate contacts are provided by residues D554, 588–594 (CSAGIGR), and Q632. C588 acts as the Phosphocysteine intermediate in catalysis.

The protein belongs to the protein-tyrosine phosphatase family. Receptor class 7 subfamily. As to quaternary structure, interacts with MAPKs. In terms of tissue distribution, detected in cerebrospinal fluid (at protein level). Expressed in brain, placenta, small intestine, stomach, uterus and weakly in the prostate. Isoform alpha has been observed only in the brain. Isoform gamma is expressed in brain, placenta and uterus. Isoform delta is expressed in brain, kidney, placenta, prostate, small intestine and uterus.

It is found in the secreted. The protein localises to the cell membrane. Its subcellular location is the cytoplasm. It localises to the perinuclear region. It carries out the reaction O-phospho-L-tyrosyl-[protein] + H2O = L-tyrosyl-[protein] + phosphate. Its function is as follows. Sequesters mitogen-activated protein kinases (MAPKs) such as MAPK1, MAPK3 and MAPK14 in the cytoplasm in an inactive form. The MAPKs bind to a dephosphorylated kinase interacting motif, phosphorylation of which by the protein kinase A complex releases the MAPKs for activation and translocation into the nucleus. The sequence is that of Receptor-type tyrosine-protein phosphatase R (PTPRR) from Homo sapiens (Human).